Consider the following 24-residue polypeptide: Humanin (24 aa).

The sufficient to interact with BID and BIM and to suppress BID and BIM activity stretch occupies residues 1–12 (MAPRGFSCLLLL). The interval 3–19 (PRGFSCLLLLTSEIDLP) is sufficient for neuroprotective activity. Residues 5-12 (GFSCLLLL) are sufficient to interact with MPP8. Required for secretion regions lie at residues 9–11 (LLL) and 19–20 (PV).

In terms of assembly, homodimer. Interacts with amyloid-beta protein 42 (Abeta42); the interaction prevents Abeta42 fibril formation. Interacts with BAX; forms fibers with BAX which results in BAX conformational changes and sequestering of BAX into the fibers, preventing BAX activation. Interacts with both full-length BID and cleaved BID p15; forms fibers with BID which results in BID conformational changes and sequestering of BID into the fibers, preventing BID activation. Interacts with BIM isoform BimEL but not with BIM isoforms BimL or BimS; the interaction prevents BIM-induced apoptosis. Interacts with IGFBP3; competes with importin KPNB1 for binding to IGFBP3, blocking IGFBP3 nuclear import. Interacts with TRIM11. Interacts with MPP8. As to expression, expressed in testis, seminal plasma and sperm (at protein level). Higher seminal plasma levels are associated with normospermia than with oligospermia, asthenospermia or oligoasthenospermia (at protein level). Higher sperm levels are associated with normospermia than with asthenospermia (at protein level). Expressed in retinal epithelial cells (at protein level). Expressed in the heart, skeletal muscle, kidney and liver. Lesser but significant expression is observed in the brain and the gastrointestinal tract. Expressed in the AD brain, where it is found in some of the large intact neurons of the occipital lobes and small and round reactive glial cells in the hippocampus.

It is found in the secreted. Its subcellular location is the cytoplasm. The protein resides in the cell projection. The protein localises to the cilium. It localises to the flagellum. It is found in the nucleus. Its subcellular location is the mitochondrion. Its function is as follows. Plays a role as a neuroprotective factor. Protects against neuronal cell death induced by multiple different familial Alzheimer disease genes and amyloid-beta proteins in Alzheimer disease. Mediates its neuroprotective effect by interacting with a receptor complex composed of IL6ST/GP130, IL27RA/WSX1 and CNTFR. Also acts as a ligand for G-protein coupled receptors FPR2/FPRL1 and FPR3/FPRL2. Inhibits amyloid-beta protein 40 fibril formation. Also inhibits amyloid-beta protein 42 fibril formation. Suppresses apoptosis by binding to BAX and preventing the translocation of BAX from the cytosol to mitochondria. Also suppresses apoptosis by binding to BID and inhibiting the interaction of BID with BAX and BAK which prevents oligomerization of BAX and BAK and suppresses release of apoptogenic proteins from mitochondria. Forms fibers with BAX and also with BID, inducing BAX and BID conformational changes and sequestering them into the fibers which prevents their activation. Can also suppress apoptosis by interacting with BIM isoform BimEL, inhibiting BimEL-induced activation of BAX, blocking oligomerization of BAX and BAK, and preventing release of apoptogenic proteins from mitochondria. Plays a role in up-regulation of anti-apoptotic protein BIRC6/APOLLON, leading to inhibition of neuronal cell death. Binds to IGFBP3 and specifically blocks IGFBP3-induced cell death. Competes with importin KPNB1 for binding to IGFBP3 which is likely to block IGFBP3 nuclear import. Induces chemotaxis of mononuclear phagocytes via FPR2/FPRL1. Reduces aggregation and fibrillary formation by suppressing the effect of APP on mononuclear phagocytes and acts by competitively inhibiting the access of FPR2 to APP. Protects retinal pigment epithelium (RPE) cells against oxidative stress-induced and endoplasmic reticulum (ER) stress-induced apoptosis. Promotes mitochondrial biogenesis in RPE cells following oxidative stress and promotes STAT3 phosphorylation which leads to inhibition of CASP3 release. Also reduces CASP4 levels in RPE cells, suppresses ER stress-induced mitochondrial superoxide production and plays a role in up-regulation of mitochondrial glutathione. Reduces testicular hormone deprivation-induced apoptosis of germ cells at the nonandrogen-sensitive stages of the seminiferous epithelium cycle. Protects endothelial cells against free fatty acid-induced inflammation by suppressing oxidative stress, reducing expression of TXNIP and inhibiting activation of the NLRP3 inflammasome which inhibits expression of pro-inflammatory cytokines IL1B and IL18. Protects against high glucose-induced endothelial cell dysfunction by mediating activation of ERK5 which leads to increased expression of transcription factor KLF2 and prevents monocyte adhesion to endothelial cells. Inhibits the inflammatory response in astrocytes. Increases the expression of PPARGC1A/PGC1A in pancreatic beta cells which promotes mitochondrial biogenesis. Increases insulin sensitivity. The sequence is that of Humanin from Homo sapiens (Human).